A 311-amino-acid polypeptide reads, in one-letter code: MERALGLPAEEDLFHKSLAASAKRMESAFRSPPGLDLSHPRDRQPSPLACYEAPEPEALLQPGVGGDPLALPPGSVCVKYGESASRSSVAESSGGEQSPDDDSDGRCELLLRGAGGDPRDASPAAGGGGGGGGGGGGGPGGGGGGGLKAAEGGCSNGHGHGGSKKSKEQKALRLNINARERRRMHDLNDALDELRAVIPYAHSPSVRKLSKIATLLLAKNYILMQAQALEEMRRLVAYLNQGQAISAASLPSSAAAAAAAAAALHPALGAYEQAAGYPFSAGLPPATSCPEKCAIFNSVSSSLCKQCTEKP.

Positions 22 to 170 are disordered; it reads AKRMESAFRS…GGSKKSKEQK (149 aa). A compositionally biased stretch (low complexity) spans 81–96; that stretch reads GESASRSSVAESSGGE. The span at 125–147 shows a compositional bias: gly residues; it reads AGGGGGGGGGGGGGPGGGGGGGL. The bHLH domain maps to 171–225; sequence ALRLNINARERRRMHDLNDALDELRAVIPYAHSPSVRKLSKIATLLLAKNYILMQ.

It localises to the nucleus. Its function is as follows. May act as a transcriptional repressor. This is Class E basic helix-loop-helix protein 22 (BHLHE22) from Gallus gallus (Chicken).